Consider the following 613-residue polypeptide: RUN domain-containing protein 1 (613 aa).

A disordered region spans residues 15–36 (AAVGPKAKDEEEEEEEPLPPCE). T54 is modified (phosphothreonine). Over residues 57–69 (LEEATAEEPGAAP) the composition is skewed to low complexity. Disordered regions lie at residues 57-79 (LEEA…PGRT), 140-177 (YEGP…RLET), and 305-330 (GKTG…KAED). 2 positions are modified to phosphoserine: S71 and S75. The segment covering 159–177 (PWLRGEDQSEQEKQERLET) has biased composition (basic and acidic residues). The stretch at 160–235 (WLRGEDQSEQ…IKKLDMNLNE (76 aa)) forms a coiled coil. Residues 309–325 (NGCSRTGSSRTPPGNSK) are compositionally biased toward polar residues. Residues 421–602 (ELTMAVRKEL…LKFSLPVDLA (182 aa)) enclose the RUN domain. S497 carries the phosphoserine modification.

Its function is as follows. May play a role as p53/TP53 inhibitor and thus may have oncogenic activity. This Homo sapiens (Human) protein is RUN domain-containing protein 1 (RUNDC1).